The primary structure comprises 66 residues: Large ribosomal subunit protein bL35 (66 aa).

This sequence belongs to the bacterial ribosomal protein bL35 family.

In Bradyrhizobium diazoefficiens (strain JCM 10833 / BCRC 13528 / IAM 13628 / NBRC 14792 / USDA 110), this protein is Large ribosomal subunit protein bL35.